Here is a 220-residue protein sequence, read N- to C-terminus: Ribosomal RNA small subunit methyltransferase G (220 aa).

Residues glycine 78, leucine 83, and arginine 144 each contribute to the S-adenosyl-L-methionine site.

This sequence belongs to the methyltransferase superfamily. RNA methyltransferase RsmG family.

Its subcellular location is the cytoplasm. The enzyme catalyses guanosine(527) in 16S rRNA + S-adenosyl-L-methionine = N(7)-methylguanosine(527) in 16S rRNA + S-adenosyl-L-homocysteine. In terms of biological role, specifically methylates the N7 position of guanine in position 527 of 16S rRNA. This Alkalilimnicola ehrlichii (strain ATCC BAA-1101 / DSM 17681 / MLHE-1) protein is Ribosomal RNA small subunit methyltransferase G.